The primary structure comprises 219 residues: Ion-translocating oxidoreductase complex subunit G (219 aa).

A helical membrane pass occupies residues 25–45 (GLLLGLFSLVSALMLALASDA). FMN phosphoryl threonine is present on T187.

The protein belongs to the RnfG family. As to quaternary structure, the complex is composed of six subunits: RnfA, RnfB, RnfC, RnfD, RnfE and RnfG. Requires FMN as cofactor.

Its subcellular location is the cellular chromatophore membrane. Part of a membrane-bound complex that couples electron transfer with translocation of ions across the membrane. The sequence is that of Ion-translocating oxidoreductase complex subunit G from Cereibacter sphaeroides (strain ATCC 17029 / ATH 2.4.9) (Rhodobacter sphaeroides).